A 98-amino-acid polypeptide reads, in one-letter code: NADH-ubiquinone oxidoreductase chain 4L (98 aa).

3 helical membrane passes run 1-21 (MASIYLNLMMAFLLALSGVLI), 26-46 (LMSTLLCLEGMMLSLFIMMTL), and 59-79 (APLILLVFSACEAGIGLALLV).

This sequence belongs to the complex I subunit 4L family. In terms of assembly, core subunit of respiratory chain NADH dehydrogenase (Complex I) which is composed of 45 different subunits.

It localises to the mitochondrion inner membrane. The catalysed reaction is a ubiquinone + NADH + 5 H(+)(in) = a ubiquinol + NAD(+) + 4 H(+)(out). Its function is as follows. Core subunit of the mitochondrial membrane respiratory chain NADH dehydrogenase (Complex I) which catalyzes electron transfer from NADH through the respiratory chain, using ubiquinone as an electron acceptor. Part of the enzyme membrane arm which is embedded in the lipid bilayer and involved in proton translocation. The sequence is that of NADH-ubiquinone oxidoreductase chain 4L (MT-ND4L) from Caenolestes fuliginosus (Shrew opossum).